The sequence spans 342 residues: Protein-glutamate methylesterase/protein-glutamine glutaminase 2 (342 aa).

Residues Asn2 to Leu119 enclose the Response regulatory domain. 4-aspartylphosphate is present on Asp53. The 194-residue stretch at Pro144 to Asn337 folds into the CheB-type methylesterase domain. Catalysis depends on residues Ser159, His186, and Asp279.

Belongs to the CheB family. Phosphorylated by CheA. Phosphorylation of the N-terminal regulatory domain activates the methylesterase activity.

The protein resides in the cytoplasm. It catalyses the reaction [protein]-L-glutamate 5-O-methyl ester + H2O = L-glutamyl-[protein] + methanol + H(+). The catalysed reaction is L-glutaminyl-[protein] + H2O = L-glutamyl-[protein] + NH4(+). In terms of biological role, involved in chemotaxis. Part of a chemotaxis signal transduction system that modulates chemotaxis in response to various stimuli. Catalyzes the demethylation of specific methylglutamate residues introduced into the chemoreceptors (methyl-accepting chemotaxis proteins or MCP) by CheR. Also mediates the irreversible deamidation of specific glutamine residues to glutamic acid. This Burkholderia mallei (strain ATCC 23344) protein is Protein-glutamate methylesterase/protein-glutamine glutaminase 2.